The sequence spans 477 residues: Spliceosome-associated protein CWC27 homolog (477 aa).

A PPIase cyclophilin-type domain is found at Ser-11–Val-166. Disordered stretches follow at residues Leu-203–Thr-355 and Thr-401–Arg-477. Acidic residues predominate over residues Glu-208 to Asn-218. Composition is skewed to basic and acidic residues over residues Ser-230 to Arg-240 and Val-247 to Ser-258. The segment covering Asp-259–Ser-279 has biased composition (acidic residues). 3 stretches are compositionally biased toward basic and acidic residues: residues Asp-280–Lys-299, Glu-311–Glu-353, and Gln-430–Asn-442. Positions Asp-308–Lys-381 form a coiled coil.

Belongs to the cyclophilin-type PPIase family. In terms of assembly, part of the activated spliceosome B/catalytic step 1 spliceosome, one of the forms of the spliceosome which has a well-formed active site but still cannot catalyze the branching reaction and is composed at least of 52 proteins, the U2, U5 and U6 snRNAs and the pre-mRNA. Recruited during early steps of activated spliceosome B maturation, it is probably one of the first proteins released from this complex as he matures to the spliceosome C complex. Component of the minor spliceosome, which splices U12-type introns.

The protein resides in the nucleus. As part of the spliceosome, plays a role in pre-mRNA splicing. Probable inactive PPIase with no peptidyl-prolyl cis-trans isomerase activity. The chain is Spliceosome-associated protein CWC27 homolog (cwc27) from Xenopus laevis (African clawed frog).